Consider the following 203-residue polypeptide: Protein Nef (203 aa).

The tract at residues 1–25 (MGNKWSKSWPQVRERMRRAPAPAAD) is disordered. The N-myristoyl glycine; by host moiety is linked to residue G2. A Phosphoserine; by host modification is found at S6. Positions 59-62 (TEEE) are acidic; interacts with host PACS1 and PACS2; stabilizes the interaction of NEF/MHC-I with host AP1M1; necessary for MHC-I internalization. Residues 66–75 (PVKPQIPLRP) are SH3-binding; interaction with Src family tyrosine kinases. The PxxP; stabilizes the interaction of NEF/MHC-I with host AP1M1; necessary for MHC-I internalization motif lies at 69-72 (PQIP). The tract at residues 105–121 (EILDLWVHNTQGYFPDW) is mediates dimerization, Nef-PTE1 interaction. Positions 145 to 177 (VDPSEVEEANEGENNCLLHPICQHGIEDEEREV) are binding to ATP6V1H. Positions 161-162 (LL) match the Dileucine internalization motif; necessary for CD4 internalization motif. The Diacidic; necessary for CD4 internalization signature appears at 171–172 (ED).

Belongs to the lentivirus primate group Nef protein family. In terms of assembly, monomer; cytosolic form. Homodimer; membrane bound form. Interacts with Nef associated p21-activated kinase (PAK2); this interaction activates PAK2. Associates with the Nef-MHC-I-AP1 complex; this complex is required for MHC-I internalization. Interacts (via C-terminus) with host PI3-kinase. Interacts with host PACS1; this interaction seems to be weak. Interacts with host PACS2. Interacts with host LCK and MAPK3; these interactions inhibit the kinase activity of the latter. Interacts with host ATP6V1H; this interaction may play a role in CD4 endocytosis. Associates with the CD4-Nef-AP2 complex; this complex is required for CD4 internalization. Interacts with host AP2 subunit alpha and AP2 subunit sigma2. Interacts with TCR-zeta chain; this interaction up-regulates the Fas ligand (FasL) surface expression. Interacts with host HCK, LYN, and SRC; these interactions activate the Src family kinases. Interacts with MAP3K5; this interaction inhibits the Fas and TNFR-mediated death signals. Interacts with beta-COP and PTE1. Interacts with human RACK1; this increases Nef phosphorylation by PKC. Interacts with TP53; this interaction decreases the half-life of TP53, protecting the infected cell against p53-mediated apoptosis. The virion-associated Nef proteins are cleaved by the viral protease to release the soluble C-terminal core protein. Nef is probably cleaved concomitantly with viral structural proteins on maturation of virus particles. Post-translationally, myristoylated. In terms of processing, phosphorylated on serine residues, probably by host PKCdelta and theta.

The protein localises to the host cell membrane. Its subcellular location is the virion. It is found in the secreted. It localises to the host Golgi apparatus membrane. In terms of biological role, factor of infectivity and pathogenicity, required for optimal virus replication. Alters numerous pathways of T-lymphocyte function and down-regulates immunity surface molecules in order to evade host defense and increase viral infectivity. Alters the functionality of other immunity cells, like dendritic cells, monocytes/macrophages and NK cells. Functionally, in infected CD4(+) T-lymphocytes, down-regulates the surface MHC-I, mature MHC-II, CD4, CD28, CCR5 and CXCR4 molecules. Mediates internalization and degradation of host CD4 through the interaction of with the cytoplasmic tail of CD4, the recruitment of AP-2 (clathrin adapter protein complex 2), internalization through clathrin coated pits, and subsequent transport to endosomes and lysosomes for degradation. Diverts host MHC-I molecules to the trans-Golgi network-associated endosomal compartments by an endocytic pathway to finally target them for degradation. MHC-I down-regulation may involve AP-1 (clathrin adapter protein complex 1) or possibly Src family kinase-ZAP70/Syk-PI3K cascade recruited by PACS2. In consequence infected cells are masked for immune recognition by cytotoxic T-lymphocytes. Decreasing the number of immune receptors also prevents reinfection by more HIV particles (superinfection). Down-regulates host SERINC3 and SERINC5 thereby excluding these proteins from the viral particles. Virion infectivity is drastically higher when SERINC3 or SERINC5 are excluded from the viral envelope, because these host antiviral proteins impair the membrane fusion event necessary for subsequent virion penetration. Its function is as follows. Bypasses host T-cell signaling by inducing a transcriptional program nearly identical to that of anti-CD3 cell activation. Interaction with TCR-zeta chain up-regulates the Fas ligand (FasL). Increasing surface FasL molecules and decreasing surface MHC-I molecules on infected CD4(+) cells send attacking cytotoxic CD8+ T-lymphocytes into apoptosis. Plays a role in optimizing the host cell environment for viral replication without causing cell death by apoptosis. Protects the infected cells from apoptosis in order to keep them alive until the next virus generation is ready to strike. Inhibits the Fas and TNFR-mediated death signals by blocking MAP3K5/ASK1. Decreases the half-life of TP53, protecting the infected cell against p53-mediated apoptosis. Inhibits the apoptotic signals regulated by the Bcl-2 family proteins through the formation of a Nef/PI3-kinase/PAK2 complex that leads to activation of PAK2 and induces phosphorylation of host BAD. In terms of biological role, extracellular Nef protein targets CD4(+) T-lymphocytes for apoptosis by interacting with CXCR4 surface receptors. In Human immunodeficiency virus type 1 group M subtype J (isolate SE9280) (HIV-1), this protein is Protein Nef.